The sequence spans 175 residues: Shikimate kinase (175 aa).

ATP is bound at residue 11–16 (GAGKTT). Threonine 15 provides a ligand contact to Mg(2+). Substrate contacts are provided by aspartate 33, arginine 57, and glycine 79. Arginine 118 serves as a coordination point for ATP. Arginine 140 is a binding site for substrate.

Belongs to the shikimate kinase family. In terms of assembly, monomer. The cofactor is Mg(2+).

The protein localises to the cytoplasm. The catalysed reaction is shikimate + ATP = 3-phosphoshikimate + ADP + H(+). It participates in metabolic intermediate biosynthesis; chorismate biosynthesis; chorismate from D-erythrose 4-phosphate and phosphoenolpyruvate: step 5/7. Its function is as follows. Catalyzes the specific phosphorylation of the 3-hydroxyl group of shikimic acid using ATP as a cosubstrate. This Phocaeicola vulgatus (strain ATCC 8482 / DSM 1447 / JCM 5826 / CCUG 4940 / NBRC 14291 / NCTC 11154) (Bacteroides vulgatus) protein is Shikimate kinase.